The sequence spans 21 residues: Glucose-1-phosphate adenylyltransferase large subunit (21 aa).

Residues 1–21 (SVTADNASETKVREIGQEKSS) form a disordered region. Residues 8-21 (SETKVREIGQEKSS) are compositionally biased toward basic and acidic residues.

This sequence belongs to the bacterial/plant glucose-1-phosphate adenylyltransferase family. In terms of assembly, heterotetramer.

It is found in the plastid. Its subcellular location is the chloroplast. The protein resides in the amyloplast. It carries out the reaction alpha-D-glucose 1-phosphate + ATP + H(+) = ADP-alpha-D-glucose + diphosphate. It participates in glycan biosynthesis; starch biosynthesis. Its activity is regulated as follows. Activated by 3'phosphoglycerate, inhibited by orthophosphate. Allosteric regulation. Functionally, this protein plays a role in synthesis of starch. It catalyzes the synthesis of the activated glycosyl donor, ADP-glucose from Glc-1-P and ATP. This is Glucose-1-phosphate adenylyltransferase large subunit from Spinacia oleracea (Spinach).